A 244-amino-acid polypeptide reads, in one-letter code: Large ribosomal subunit protein uL30 (244 aa).

Positions 1-37 (MAPTKKVPQVPETVLKRRKQRADARTKAAQHKVTVAA) are disordered.

Belongs to the universal ribosomal protein uL30 family.

Binds to G-rich structures in 28S rRNA and in mRNAs. Plays a regulatory role in the translation apparatus; inhibits cell-free translation of mRNAs. The protein is Large ribosomal subunit protein uL30 (rpl-7) of Caenorhabditis elegans.